Reading from the N-terminus, the 355-residue chain is Peptide chain release factor 1 (355 aa).

Glutamine 232 carries the post-translational modification N5-methylglutamine. A disordered region spans residues 282 to 309 (EQNASISAERKSQVGSGDRSERIRTYNY). Basic and acidic residues predominate over residues 289–305 (AERKSQVGSGDRSERIR).

This sequence belongs to the prokaryotic/mitochondrial release factor family. In terms of processing, methylated by PrmC. Methylation increases the termination efficiency of RF1.

It localises to the cytoplasm. In terms of biological role, peptide chain release factor 1 directs the termination of translation in response to the peptide chain termination codons UAG and UAA. The polypeptide is Peptide chain release factor 1 (Desulfatibacillum aliphaticivorans).